The following is a 207-amino-acid chain: Large ribosomal subunit protein uL4 (207 aa).

The disordered stretch occupies residues 50 to 76 (KTKTVSEVSGTTKKPFKQKGTGNARQG).

It belongs to the universal ribosomal protein uL4 family. Part of the 50S ribosomal subunit.

Functionally, one of the primary rRNA binding proteins, this protein initially binds near the 5'-end of the 23S rRNA. It is important during the early stages of 50S assembly. It makes multiple contacts with different domains of the 23S rRNA in the assembled 50S subunit and ribosome. Its function is as follows. Forms part of the polypeptide exit tunnel. The protein is Large ribosomal subunit protein uL4 of Rickettsia canadensis (strain McKiel).